The primary structure comprises 602 residues: NADH-quinone oxidoreductase subunit C/D (602 aa).

The segment at 1–192 is NADH dehydrogenase I subunit C; it reads MVNNMTDLTA…DPFELTKAKQ (192 aa). Positions 216–602 are NADH dehydrogenase I subunit D; it reads DFMFLNLGPN…IDFVMSDVDR (387 aa).

The protein in the N-terminal section; belongs to the complex I 30 kDa subunit family. It in the C-terminal section; belongs to the complex I 49 kDa subunit family. NDH-1 is composed of 13 different subunits. Subunits NuoB, CD, E, F, and G constitute the peripheral sector of the complex.

The protein resides in the cell inner membrane. The catalysed reaction is a quinone + NADH + 5 H(+)(in) = a quinol + NAD(+) + 4 H(+)(out). Its function is as follows. NDH-1 shuttles electrons from NADH, via FMN and iron-sulfur (Fe-S) centers, to quinones in the respiratory chain. The immediate electron acceptor for the enzyme in this species is believed to be ubiquinone. Couples the redox reaction to proton translocation (for every two electrons transferred, four hydrogen ions are translocated across the cytoplasmic membrane), and thus conserves the redox energy in a proton gradient. The sequence is that of NADH-quinone oxidoreductase subunit C/D from Klebsiella pneumoniae subsp. pneumoniae (strain ATCC 700721 / MGH 78578).